The sequence spans 366 residues: Histidinol-phosphate aminotransferase (366 aa).

Position 222 is an N6-(pyridoxal phosphate)lysine (Lys222).

It belongs to the class-II pyridoxal-phosphate-dependent aminotransferase family. Histidinol-phosphate aminotransferase subfamily. Homodimer. It depends on pyridoxal 5'-phosphate as a cofactor.

It carries out the reaction L-histidinol phosphate + 2-oxoglutarate = 3-(imidazol-4-yl)-2-oxopropyl phosphate + L-glutamate. It participates in amino-acid biosynthesis; L-histidine biosynthesis; L-histidine from 5-phospho-alpha-D-ribose 1-diphosphate: step 7/9. This Lysinibacillus sphaericus (strain C3-41) protein is Histidinol-phosphate aminotransferase.